Consider the following 1171-residue polypeptide: Pesticidal crystal protein Cry1Ea (1171 aa).

Residues 1094–1124 (ESNSSVHASVYEEKSYTDRRRENPCESNRGY) form a disordered region. The segment covering 1103-1117 (VYEEKSYTDRRRENP) has biased composition (basic and acidic residues).

Belongs to the delta endotoxin family.

In terms of biological role, promotes colloidosmotic lysis by binding to the midgut epithelial cells of many lepidopteran larvae including Spodoptera species. The sequence is that of Pesticidal crystal protein Cry1Ea (cry1Ea) from Bacillus thuringiensis subsp. kenyae.